Here is a 107-residue protein sequence, read N- to C-terminus: U1-lycotoxin-Ls1b (107 aa).

Positions 1–20 are cleaved as a signal peptide; sequence MMKVLVVIALLVTLISYSSS. Positions 21 to 41 are excised as a propeptide; that stretch reads EGIDDLEADELLSLMANEQTR. 4 cysteine pairs are disulfide-bonded: Cys-44/Cys-59, Cys-51/Cys-68, Cys-58/Cys-86, and Cys-70/Cys-84.

This sequence belongs to the neurotoxin 19 (CSTX) family. 04 (U1-Lctx) subfamily. As to expression, expressed by the venom gland.

Its subcellular location is the secreted. This Lycosa singoriensis (Wolf spider) protein is U1-lycotoxin-Ls1b.